The chain runs to 317 residues: Acetyl-coenzyme A carboxylase carboxyl transferase subunit alpha (317 aa).

The 255-residue stretch at 39-293 (KLEGKAQEAL…GNAIAEAMGS (255 aa)) folds into the CoA carboxyltransferase C-terminal domain.

Belongs to the AccA family. In terms of assembly, acetyl-CoA carboxylase is a heterohexamer composed of biotin carboxyl carrier protein (AccB), biotin carboxylase (AccC) and two subunits each of ACCase subunit alpha (AccA) and ACCase subunit beta (AccD).

The protein resides in the cytoplasm. It carries out the reaction N(6)-carboxybiotinyl-L-lysyl-[protein] + acetyl-CoA = N(6)-biotinyl-L-lysyl-[protein] + malonyl-CoA. The protein operates within lipid metabolism; malonyl-CoA biosynthesis; malonyl-CoA from acetyl-CoA: step 1/1. Component of the acetyl coenzyme A carboxylase (ACC) complex. First, biotin carboxylase catalyzes the carboxylation of biotin on its carrier protein (BCCP) and then the CO(2) group is transferred by the carboxyltransferase to acetyl-CoA to form malonyl-CoA. The polypeptide is Acetyl-coenzyme A carboxylase carboxyl transferase subunit alpha (Azorhizobium caulinodans (strain ATCC 43989 / DSM 5975 / JCM 20966 / LMG 6465 / NBRC 14845 / NCIMB 13405 / ORS 571)).